The chain runs to 28 residues: 3-phytase B (28 aa).

The segment at 1–28 (RDPTGCEVDQVIMVKRHGERYPSPSAGK) is disordered. His17 acts as the Nucleophile in catalysis.

This sequence belongs to the histidine acid phosphatase family.

It catalyses the reaction 1D-myo-inositol hexakisphosphate + H2O = 1D-myo-inositol 1,2,4,5,6-pentakisphosphate + phosphate. In terms of biological role, catalyzes the hydrolysis of inorganic orthophosphate from phytate. The polypeptide is 3-phytase B (phyB) (Aspergillus ficuum).